A 199-amino-acid polypeptide reads, in one-letter code: Holliday junction branch migration complex subunit RuvA (199 aa).

Residues 1–63 (MYEYLTGLVT…EDNISLFGFT (63 aa)) are domain I. Positions 64-142 (DQNEKNLFMQ…NESSSSLFAT (79 aa)) are domain II. The tract at residues 143 to 149 (TQLTVDA) is flexible linker. Residues 150–199 (TVNRELKDALEALAALGYKERDIKKVQKALMKEEQMATDEYLRQALRLLN) form a domain III region.

The protein belongs to the RuvA family. As to quaternary structure, homotetramer. Forms an RuvA(8)-RuvB(12)-Holliday junction (HJ) complex. HJ DNA is sandwiched between 2 RuvA tetramers; dsDNA enters through RuvA and exits via RuvB. An RuvB hexamer assembles on each DNA strand where it exits the tetramer. Each RuvB hexamer is contacted by two RuvA subunits (via domain III) on 2 adjacent RuvB subunits; this complex drives branch migration. In the full resolvosome a probable DNA-RuvA(4)-RuvB(12)-RuvC(2) complex forms which resolves the HJ.

It localises to the cytoplasm. Its function is as follows. The RuvA-RuvB-RuvC complex processes Holliday junction (HJ) DNA during genetic recombination and DNA repair, while the RuvA-RuvB complex plays an important role in the rescue of blocked DNA replication forks via replication fork reversal (RFR). RuvA specifically binds to HJ cruciform DNA, conferring on it an open structure. The RuvB hexamer acts as an ATP-dependent pump, pulling dsDNA into and through the RuvAB complex. HJ branch migration allows RuvC to scan DNA until it finds its consensus sequence, where it cleaves and resolves the cruciform DNA. This is Holliday junction branch migration complex subunit RuvA from Limosilactobacillus reuteri subsp. reuteri (strain JCM 1112) (Lactobacillus reuteri).